The following is a 484-amino-acid chain: Zinc metalloproteinase-disintegrin stejnitin (484 aa).

A signal peptide spans 1–20; the sequence is MIQVLLVTICLAVFPYQGNS. Residues 21–192 constitute a propeptide that is removed on maturation; the sequence is IILESGNVND…ASQLNLTPDE (172 aa). Q193 carries the pyrrolidone carboxylic acid modification. Residues 194–392 form the Peptidase M12B domain; that stretch reads RFIELVIVAD…YTSRCLYNGP (199 aa). A Ca(2+)-binding site is contributed by E197. N254 carries N-linked (GlcNAc...) asparagine glycosylation. D281 provides a ligand contact to Ca(2+). 3 disulfides stabilise this stretch: C305-C387, C345-C369, and C347-C352. Zn(2+)-binding residues include H330, H334, and H340. C387, N390, V402, N405, E409, E412, and D415 together coordinate Ca(2+). Positions 400–484 constitute a Disintegrin domain; that stretch reads PPVCGNYYVE…GDCPRNPFRA (85 aa). 7 cysteine pairs are disulfide-bonded: C403–C422, C414–C432, C416–C427, C426–C449, C440–C446, C445–C470, and C458–C477. The Cell attachment site motif lies at 462-464; that stretch reads KGD.

It belongs to the venom metalloproteinase (M12B) family. P-II subfamily. P-IIb sub-subfamily. Requires Zn(2+) as cofactor. Post-translationally, the N-terminus is blocked. Expressed by the venom gland.

The protein localises to the secreted. Snake venom zinc metalloproteinase that inhibits ADP-induced platelet aggregation in human platelet-rich plasma (IC(50) is 175 nM) and cleaves alpha-(FGA) and subsequently the beta-chain (FGG) of bovine fibrinogen, leaving the gamma-chain unaffected. It is also able to inhibit proliferatin of ECV304 cells by inducing apoptosis of these cells. The chain is Zinc metalloproteinase-disintegrin stejnitin from Trimeresurus stejnegeri (Chinese green tree viper).